The primary structure comprises 869 residues: Bifunctional uridylyltransferase/uridylyl-removing enzyme (869 aa).

The tract at residues 1–332 (MTATPADRPD…QFDGEAVPVQ (332 aa)) is uridylyltransferase. The segment at 333–691 (LDAGFSLRRG…RRAVPDNDAL (359 aa)) is uridylyl-removing. One can recognise an HD domain in the interval 450–572 (VDQHTLMVLR…VGTRERLDYL (123 aa)). 2 consecutive ACT domains span residues 692–771 (EVFV…PSRR) and 798–869 (RISL…LDPT).

Belongs to the GlnD family. Mg(2+) serves as cofactor.

It catalyses the reaction [protein-PII]-L-tyrosine + UTP = [protein-PII]-uridylyl-L-tyrosine + diphosphate. The enzyme catalyses [protein-PII]-uridylyl-L-tyrosine + H2O = [protein-PII]-L-tyrosine + UMP + H(+). With respect to regulation, uridylyltransferase (UTase) activity is inhibited by glutamine, while glutamine activates uridylyl-removing (UR) activity. In terms of biological role, modifies, by uridylylation and deuridylylation, the PII regulatory proteins (GlnB and homologs), in response to the nitrogen status of the cell that GlnD senses through the glutamine level. Under low glutamine levels, catalyzes the conversion of the PII proteins and UTP to PII-UMP and PPi, while under higher glutamine levels, GlnD hydrolyzes PII-UMP to PII and UMP (deuridylylation). Thus, controls uridylylation state and activity of the PII proteins, and plays an important role in the regulation of nitrogen assimilation and metabolism. This chain is Bifunctional uridylyltransferase/uridylyl-removing enzyme, found in Xanthomonas campestris pv. campestris (strain 8004).